A 103-amino-acid polypeptide reads, in one-letter code: MAGRSGVNDEELLRAIRVIKILYQSNPYPNDSGTRQARKNRRRRWRARQRQIRALSERILSSCVGGLQEPSTLPLPPLDRLSLNPEEDLGTSETEHPQGTATT.

Phosphoserine; by host CK2 is present on S5. The segment at 18-26 is homomultimerization; that stretch reads VIKILYQSN. The span at 25 to 34 shows a compositional bias: polar residues; it reads SNPYPNDSGT. Disordered stretches follow at residues 25-48 and 66-103; these read SNPY…WRAR and GLQE…TATT. The Nuclear localization signal and RNA-binding (RRE) signature appears at 34 to 50; it reads TRQARKNRRRRWRARQR. The span at 36–48 shows a compositional bias: basic residues; sequence QARKNRRRRWRAR. Residues 73–84 carry the Nuclear export signal and binding to XPO1 motif; it reads LPLPPLDRLSLN. S92 is subject to Phosphoserine; by host.

It belongs to the HIV-1 REV protein family. In terms of assembly, homomultimer; when bound to the RRE. Multimeric assembly is essential for activity and may involve XPO1. Binds to human KPNB1, XPO1, TNPO1, RANBP5 and IPO7. Interacts with the viral Integrase. Interacts with human KHDRBS1. Interacts with human NAP1; this interaction decreases Rev multimerization and stimulates its activity. Interacts with human DEAD-box helicases DDX3 and DDX24; these interactions may serve for viral RNA export to the cytoplasm and packaging, respectively. Interacts with human PSIP1; this interaction may inhibit HIV-1 DNA integration by promoting dissociation of the Integrase-LEDGF/p75 complex. Post-translationally, asymmetrically arginine dimethylated at one site by host PRMT6. Methylation impairs the RNA-binding activity and export of viral RNA from the nucleus to the cytoplasm. In terms of processing, phosphorylated by protein kinase CK2. Presence of, and maybe binding to the N-terminus of the regulatory beta subunit of CK2 is necessary for CK2-mediated Rev's phosphorylation.

It localises to the host nucleus. The protein localises to the host nucleolus. The protein resides in the host cytoplasm. Functionally, escorts unspliced or incompletely spliced viral pre-mRNAs (late transcripts) out of the nucleus of infected cells. These pre-mRNAs carry a recognition sequence called Rev responsive element (RRE) located in the env gene, that is not present in fully spliced viral mRNAs (early transcripts). This function is essential since most viral proteins are translated from unspliced or partially spliced pre-mRNAs which cannot exit the nucleus by the pathway used by fully processed cellular mRNAs. Rev itself is translated from a fully spliced mRNA that readily exits the nucleus. Rev's nuclear localization signal (NLS) binds directly to KPNB1/Importin beta-1 without previous binding to KPNA1/Importin alpha-1. KPNB1 binds to the GDP bound form of RAN (Ran-GDP) and targets Rev to the nucleus. In the nucleus, the conversion from Ran-GDP to Ran-GTP dissociates Rev from KPNB1 and allows Rev's binding to the RRE in viral pre-mRNAs. Rev multimerization on the RRE via cooperative assembly exposes its nuclear export signal (NES) to the surface. Rev can then form a complex with XPO1/CRM1 and Ran-GTP, leading to nuclear export of the complex. Conversion from Ran-GTP to Ran-GDP mediates dissociation of the Rev/RRE/XPO1/RAN complex, so that Rev can return to the nucleus for a subsequent round of export. Beside KPNB1, also seems to interact with TNPO1/Transportin-1, RANBP5/IPO5 and IPO7/RANBP7 for nuclear import. The nucleoporin-like HRB/RIP is an essential cofactor that probably indirectly interacts with Rev to release HIV RNAs from the perinuclear region to the cytoplasm. The sequence is that of Protein Rev from Pan troglodytes (Chimpanzee).